Reading from the N-terminus, the 179-residue chain is Large ribosomal subunit protein uL5 (179 aa).

This sequence belongs to the universal ribosomal protein uL5 family. In terms of assembly, part of the 50S ribosomal subunit; part of the 5S rRNA/L5/L18/L25 subcomplex. Contacts the 5S rRNA and the P site tRNA. Forms a bridge to the 30S subunit in the 70S ribosome.

This is one of the proteins that bind and probably mediate the attachment of the 5S RNA into the large ribosomal subunit, where it forms part of the central protuberance. In the 70S ribosome it contacts protein S13 of the 30S subunit (bridge B1b), connecting the 2 subunits; this bridge is implicated in subunit movement. Contacts the P site tRNA; the 5S rRNA and some of its associated proteins might help stabilize positioning of ribosome-bound tRNAs. This is Large ribosomal subunit protein uL5 from Clostridium beijerinckii (strain ATCC 51743 / NCIMB 8052) (Clostridium acetobutylicum).